A 341-amino-acid chain; its full sequence is MFNNSSKILFITIMIIGTLITVTSNSWLGAWMGLEINLLSFIPLLSDNNNLMSTEASLKYFLTQVLASTVLLFSSILLMLKNNMNNEINESFTSMIIMSALLLKSGAAPFHFWFPNMMEGLTWMNALMLMTWQKIAPLMLISYLNIKYLLLISVILSVIIGAIGGLNQTSLRKLMAFSSINHLGWMLSSLMISESIWLIYFFFYSFLSFVLTFMFNIFKLFHLNQLFSWFVNSKILKFTLFMNFLSLGGLPPFLGFLPKWLVIQQLTLCNQYFMLTLMMMSTLITLFFYLRICYSAFMMNYFENNWIMKMNMNSINYNMYMIMTFFSIFGLFLISLFYFMF.

The next 9 helical transmembrane spans lie at 8–28, 60–80, 95–115, 121–141, 146–166, 195–215, 238–258, 273–293, and 321–341; these read ILFI…NSWL, YFLT…LLML, MIIM…FWFP, LTWM…LMLI, IKYL…IGGL, SIWL…TFMF, FTLF…GFLP, FMLT…LRIC, and MIMT…YFMF.

It belongs to the complex I subunit 2 family.

Its subcellular location is the mitochondrion inner membrane. It carries out the reaction a ubiquinone + NADH + 5 H(+)(in) = a ubiquinol + NAD(+) + 4 H(+)(out). Its function is as follows. Core subunit of the mitochondrial membrane respiratory chain NADH dehydrogenase (Complex I) that is believed to belong to the minimal assembly required for catalysis. Complex I functions in the transfer of electrons from NADH to the respiratory chain. The immediate electron acceptor for the enzyme is believed to be ubiquinone. This chain is NADH-ubiquinone oxidoreductase chain 2 (mt:ND2), found in Drosophila melanogaster (Fruit fly).